The following is a 128-amino-acid chain: MALSKAEILDAIAGMTVLELSELIKEMEEKFGVSAAAVAVAAPAGGAAAGEGAAAVEEQTEFDVILTAAGANKVNTIKVVRAITGLGLKEAKDLVDGAPKPVKEGVAKAEAESVKAQLVEAGAEAEIK.

It belongs to the bacterial ribosomal protein bL12 family. In terms of assembly, homodimer. Part of the ribosomal stalk of the 50S ribosomal subunit. Forms a multimeric L10(L12)X complex, where L10 forms an elongated spine to which 2 to 4 L12 dimers bind in a sequential fashion. Binds GTP-bound translation factors.

Its function is as follows. Forms part of the ribosomal stalk which helps the ribosome interact with GTP-bound translation factors. Is thus essential for accurate translation. The chain is Large ribosomal subunit protein bL12 from Acidithiobacillus ferrooxidans (strain ATCC 23270 / DSM 14882 / CIP 104768 / NCIMB 8455) (Ferrobacillus ferrooxidans (strain ATCC 23270)).